The chain runs to 421 residues: GTPase Obg (421 aa).

The Obg domain occupies 4-161 (LHFIDEAFNE…FKIKIQLKVL (158 aa)). The OBG-type G domain occupies 162–327 (ADVGLLGFPS…LKYAIKNLLQ (166 aa)). GTP-binding positions include 168-175 (GFPSVGKS), 193-197 (FTTLF), 214-217 (DLPG), 281-284 (NKMD), and 308-310 (SLI). Mg(2+) contacts are provided by Ser175 and Thr195. The 79-residue stretch at 343 to 421 (DLNSETQTFT…ICNYLFDFVI (79 aa)) folds into the OCT domain.

The protein belongs to the TRAFAC class OBG-HflX-like GTPase superfamily. OBG GTPase family. In terms of assembly, monomer. The cofactor is Mg(2+).

It localises to the cytoplasm. In terms of biological role, an essential GTPase which binds GTP, GDP and possibly (p)ppGpp with moderate affinity, with high nucleotide exchange rates and a fairly low GTP hydrolysis rate. Plays a role in control of the cell cycle, stress response, ribosome biogenesis and in those bacteria that undergo differentiation, in morphogenesis control. The polypeptide is GTPase Obg (Phytoplasma australiense).